We begin with the raw amino-acid sequence, 318 residues long: NADH-ubiquinone oxidoreductase chain 1 (318 aa).

9 helical membrane passes run 2–22, 36–56, 69–89, 100–120, 130–152, 171–191, 217–237, 254–273, and 294–314; these read FLTN…FLTL, GPNI…IKLF, LLFT…WIPL, LGML…LWSG, IGAL…ILLH, HIWL…STLA, AGPF…MNAL, LYST…FLWI, and LPLT…LTSI.

The protein belongs to the complex I subunit 1 family.

It is found in the mitochondrion inner membrane. It carries out the reaction a ubiquinone + NADH + 5 H(+)(in) = a ubiquinol + NAD(+) + 4 H(+)(out). Its function is as follows. Core subunit of the mitochondrial membrane respiratory chain NADH dehydrogenase (Complex I) that is believed to belong to the minimal assembly required for catalysis. Complex I functions in the transfer of electrons from NADH to the respiratory chain. The immediate electron acceptor for the enzyme is believed to be ubiquinone. The polypeptide is NADH-ubiquinone oxidoreductase chain 1 (MT-ND1) (Cyclopes didactylus (Silky anteater)).